The primary structure comprises 382 residues: Neuropeptide Y receptor type 1 (382 aa).

Over 1-33 (MNSTLFSRVENYSVHYNVSENSPFLAFENDDCH) the chain is Extracellular. 3 N-linked (GlcNAc...) asparagine glycosylation sites follow: Asn-2, Asn-11, and Asn-17. The helical transmembrane segment at 34–54 (LPLAVIFTLALAYGAVIILGV) threads the bilayer. Residues 55–75 (SGNLALIIIILKQKEMRNVTN) lie on the Cytoplasmic side of the membrane. Residues 76 to 96 (ILIVNLSFSDLLVAVMCLPFT) traverse the membrane as a helical segment. Residues 97 to 115 (FVYTLMDHWVFGETMCKLN) lie on the Extracellular side of the membrane. Cys-112 and Cys-197 are oxidised to a cystine. The helical transmembrane segment at 116–136 (PFVQCVSITVSIFSLVLIAVE) threads the bilayer. Residues 137–153 (RHQLIINPRGWRPNNRH) are Cytoplasmic-facing. A helical membrane pass occupies residues 154–174 (AYIGITVIWVLAVASSLPFVI). Residues 175-210 (YQILTDEPFQNVSLAAFKDKYVCFDKFPSDSHRLSY) lie on the Extracellular side of the membrane. A helical membrane pass occupies residues 211 to 231 (TTLLLVLQYFGPLCFIFICYF). The Cytoplasmic portion of the chain corresponds to 232–259 (KIYIRLKRRNNMMDKIRDSKYRSSETKR). Residues 260–280 (INVMLLSIVVAFAVCWLPLTI) traverse the membrane as a helical segment. Residues 281-298 (FNTVFDWNHQIIATCNHN) lie on the Extracellular side of the membrane. A helical transmembrane segment spans residues 299–319 (LLFLLCHLTAMISTCVNPIFY). The Cytoplasmic portion of the chain corresponds to 320–382 (GFLNKNFQRD…KISMNDNEKI (63 aa)). Cys-337 carries S-palmitoyl cysteine lipidation. Phosphoserine occurs at positions 367 and 375.

This sequence belongs to the G-protein coupled receptor 1 family. As to expression, brain.

It localises to the cell membrane. Its function is as follows. Receptor for neuropeptide Y and peptide YY. This chain is Neuropeptide Y receptor type 1 (Npy1r), found in Rattus norvegicus (Rat).